The following is a 220-amino-acid chain: Metalloproteinase inhibitor 2 (220 aa).

The signal sequence occupies residues 1-26 (MGAAARSLPLAFCLLLLGTLLPRADA). C27 lines the Zn(2+) pocket. Residues 27 to 30 (CSCS) form an involved in metalloproteinase-binding region. 6 disulfides stabilise this stretch: C27–C98, C29–C127, C39–C152, C154–C201, C159–C164, and C172–C193. One can recognise an NTR domain in the interval 27 to 152 (CSCSPVHPQQ…SLNHRYQMGC (126 aa)).

This sequence belongs to the protease inhibitor I35 (TIMP) family. In terms of assembly, interacts (via the C-terminal) with MMP2 (via the C-terminal PEX domain); the interaction inhibits the MMP2 activity. Post-translationally, the activity of TIMP2 is dependent on the presence of disulfide bonds.

The protein localises to the secreted. Complexes with metalloproteinases (such as collagenases) and irreversibly inactivates them by binding to their catalytic zinc cofactor. This is Metalloproteinase inhibitor 2 (TIMP2) from Bos taurus (Bovine).